A 712-amino-acid polypeptide reads, in one-letter code: Small ribosomal subunit protein uS3c (712 aa).

The interval 1-118 (MGQKVHPLGF…IKVSKDLVTN (118 aa)) is S3-like 1st part. The segment at 119 to 580 (LQKTRKYLFK…LQTAFLTQIE (462 aa)) is intervening sequence (IVS). The interval 581-712 (SQRKMYKANL…VWIFKGYSKI (132 aa)) is S3-like 2nd part.

Belongs to the universal ribosomal protein uS3 family. Part of the 30S ribosomal subunit.

Its subcellular location is the plastid. The protein resides in the chloroplast. This is Small ribosomal subunit protein uS3c (rps3) from Chlamydomonas reinhardtii (Chlamydomonas smithii).